The sequence spans 1682 residues: 1-phosphatidylinositol 4,5-bisphosphate phosphodiesterase eta-1 (1682 aa).

A PH domain is found at 20 to 128; the sequence is SVMQSGTQMI…WITGLKYLMA (109 aa). 3 EF-hand domains span residues 142 to 177, 178 to 214, and 226 to 246; these read THDQ…LNVN, LPRR…MSLR, and DKKD…EQKM. Ca(2+) is bound by residues aspartate 155, asparagine 157, aspartate 159, and glutamate 166. The PI-PLC X-box domain maps to 299-444; the sequence is QDMDQPLCNY…LKGKILVKGK (146 aa). Histidine 314 is a catalytic residue. The Ca(2+) site is built by asparagine 315, glutamate 344, and aspartate 346. Histidine 358 is a catalytic residue. Residue glutamate 393 coordinates Ca(2+). Lysine 442 and lysine 444 together coordinate substrate. A disordered region spans residues 534–588; sequence LDVKESGKKSHGRSLMANFGKHKQKATKSRSKSYSTDDEDDSLQNPGKEGGQLYR. The segment covering 553–564 has biased composition (basic residues); that stretch reads GKHKQKATKSRS. The PI-PLC Y-box domain maps to 602 to 715; sequence LSDLVVYTNS…GYILKPQQMC (114 aa). 2 residues coordinate substrate: serine 628 and arginine 655. The C2 domain maps to 716–844; that stretch reads KGTFNPFSGD…PGYRHVYLEG (129 aa). Residues isoleucine 759, aspartate 761, aspartate 785, aspartate 814, histidine 815, and aspartate 816 each contribute to the Ca(2+) site. Positions 992 to 1018 are enriched in basic and acidic residues; it reads DTDGKENCLAGDKDDRRKGAATRKDPH. Disordered stretches follow at residues 992-1083, 1296-1321, and 1581-1603; these read DTDG…LSPR, NLPG…HSQV, and RAKE…GGVV. Residues 1019-1033 show a composition bias toward low complexity; sequence FSNFNKKLSSSSSAL. 2 stretches are compositionally biased toward polar residues: residues 1040 to 1050 and 1065 to 1074; these read QGPTASVSNPE and NMTNDCQENH. Over residues 1581–1590 the composition is skewed to basic and acidic residues; it reads RAKEKQEAGK.

It depends on Ca(2+) as a cofactor. Expressed in brain and to a lower extent in lung. In brain, it is found in cerebrum, cerebellum and spinal cord.

It localises to the cytoplasm. It is found in the membrane. The catalysed reaction is a 1,2-diacyl-sn-glycero-3-phospho-(1D-myo-inositol-4,5-bisphosphate) + H2O = 1D-myo-inositol 1,4,5-trisphosphate + a 1,2-diacyl-sn-glycerol + H(+). Functionally, the production of the second messenger molecules diacylglycerol (DAG) and inositol 1,4,5-trisphosphate (IP3) is mediated by calcium-activated phosphatidylinositol-specific phospholipase C enzymes. The chain is 1-phosphatidylinositol 4,5-bisphosphate phosphodiesterase eta-1 from Mus musculus (Mouse).